A 416-amino-acid polypeptide reads, in one-letter code: MAAGAVVGAWMLVLSLGGTVTGDQNITARIGKPLVLNCKGAPKKPPQQLEWKLNTGRTEAWKVLSPQGDPWDSVARVLPNGSLLLPAVGIQDEGTFRCRATSRSGKETKSNYRVRVYQIPGKPEIVDPASELMAGVPNKVGTCVSEGGYPAGTLNWLLDGKTLIPDGKGVSVKEETKRHPKTGLFTLHSELMVTPARGGALHPTFSCSFTPGLPRRRALHTAPIQLRVWSEHRGGEGPNVDAVPLKEVQLVVEPEGGAVAPGGTVTLTCEAPAQPPPQIHWIKDGRPLPLPPGPMLLLPEVGPEDQGTYSCVATHPSHGPQESRAVSVTIIETGEEGTTAGSVEGPGLETLALTLGILGGLGTVALLIGVIVWHRRRQRKGQERKVPENQEEEEEERAELNQPEEPEAAESSTGGP.

A signal peptide spans 1 to 22 (MAAGAVVGAWMLVLSLGGTVTG). The 93-residue stretch at 23–115 (DQNITARIGK…KETKSNYRVR (93 aa)) folds into the Ig-like V-type domain. At 23-352 (DQNITARIGK…VEGPGLETLA (330 aa)) the chain is on the extracellular side. N-linked (GlcNAc...) asparagine glycans are attached at residues N25 and N80. Intrachain disulfides connect C38–C98 and C143–C207. Ig-like C2-type domains lie at 123 to 220 (PEIV…RALH) and 238 to 327 (PNVD…RAVS). The helical transmembrane segment at 353-373 (LTLGILGGLGTVALLIGVIVW) threads the bilayer. Topologically, residues 374-416 (HRRRQRKGQERKVPENQEEEEEERAELNQPEEPEAAESSTGGP) are cytoplasmic. The tract at residues 377–416 (RQRKGQERKVPENQEEEEEERAELNQPEEPEAAESSTGGP) is disordered. Over residues 389–408 (NQEEEEEERAELNQPEEPEA) the composition is skewed to acidic residues.

Constitutive homodimer; disulfide-linked. Forms homooligomers. Interacts with S100A1 and APP. Interacts with S100B, S100A12 and S100A14. Interacts with TIRAP. Interacts with HMGB1. Interacts with LGP2; this interaction plays an important role in AGER-mediated pro-inflammatory responses and cytokine release. Interacts with double-strand break repair protein MRE11 which is a core component of the MRN complex; the interaction enhances MRE11 endonuclease activity and promotes DNA repair. Interacts with the MCM2-7 complex via interaction with complex member MCM2; the interaction is increased following DNA replication stress and stabilizes the MCM2-7 complex at replication forks. Phosphorylated on its cytoplasmic domain by PKCzeta/PRKCZ upon ligand binding. Phosphorylated by ATM following DNA damage. In terms of processing, targeted by the ubiquitin E3 ligase subunit FBXO10 to mediate its ubiquitination and degradation. Endothelial cells.

The protein localises to the cell membrane. Its subcellular location is the cell projection. It localises to the phagocytic cup. It is found in the early endosome. The protein resides in the nucleus. Cell surface pattern recognition receptor that senses endogenous stress signals with a broad ligand repertoire including advanced glycation end products, S100 proteins, high-mobility group box 1 protein/HMGB1, amyloid beta/APP oligomers, nucleic acids, histones, phospholipids and glycosaminoglycans. Advanced glycosylation end products are nonenzymatically glycosylated proteins which accumulate in vascular tissue in aging and at an accelerated rate in diabetes. These ligands accumulate at inflammatory sites during the pathogenesis of various diseases including diabetes, vascular complications, neurodegenerative disorders and cancers, and RAGE transduces their binding into pro-inflammatory responses. Upon ligand binding, uses TIRAP and MYD88 as adapters to transduce the signal ultimately leading to the induction of inflammatory cytokines IL6, IL8 and TNFalpha through activation of NF-kappa-B. Interaction with S100A12 on endothelium, mononuclear phagocytes, and lymphocytes triggers cellular activation, with generation of key pro-inflammatory mediators. Interaction with S100B after myocardial infarction may play a role in myocyte apoptosis by activating ERK1/2 and p53/TP53 signaling. Contributes to the translocation of amyloid-beta peptide (ABPP) across the cell membrane from the extracellular to the intracellular space in cortical neurons. ABPP-initiated RAGE signaling, especially stimulation of p38 mitogen-activated protein kinase (MAPK), has the capacity to drive a transport system delivering ABPP as a complex with RAGE to the intraneuronal space. Participates in endothelial albumin transcytosis together with HMGB1 through the RAGE/SRC/Caveolin-1 pathway, leading to endothelial hyperpermeability. Mediates the loading of HMGB1 in extracellular vesicles (EVs) that shuttle HMGB1 to hepatocytes by transferrin-mediated endocytosis and subsequently promote hepatocyte pyroptosis by activating the NLRP3 inflammasome. Binds to DNA and promotes extracellular hypomethylated DNA (CpG DNA) uptake by cells via the endosomal route to activate inflammatory responses. Mediates phagocytosis by non-professional phagocytes (NPP) and this is enhanced by binding to ligands including RNA, DNA, HMGB1 and histones. Promotes NPP-mediated phagocytosis of Saccharomyces cerevisiae spores by binding to RNA attached to the spore wall. Also promotes NPP-mediated phagocytosis of apoptotic cells. Following DNA damage, recruited to DNA double-strand break sites where it colocalizes with the MRN repair complex via interaction with double-strand break repair protein MRE11. Enhances the endonuclease activity of MRE11, promoting the end resection of damaged DNA. Promotes DNA damage repair in trophoblasts which enhances trophoblast invasion and contributes to placental development and maintenance. Protects cells from DNA replication stress by localizing to damaged replication forks where it stabilizes the MCM2-7 complex and promotes faithful progression of the replication fork. The protein is Advanced glycosylation end product-specific receptor (AGER) of Bos taurus (Bovine).